A 144-amino-acid chain; its full sequence is MLNIEQIKEIIPHRYPFLLVDQVLEVEEGKRAVGIKNVSANEEFFNGHFPEYAVMPGVLIVEALAQVGAIAILKKEENRGRLAFFGGIDHCRFKKQVRPGDQLRLEVELTRVRGPIGKGKAVATVDGEIVCEAEITFALGEKKE.

His48 is an active-site residue.

This sequence belongs to the thioester dehydratase family. FabZ subfamily.

The protein resides in the cytoplasm. It carries out the reaction a (3R)-hydroxyacyl-[ACP] = a (2E)-enoyl-[ACP] + H2O. Functionally, involved in unsaturated fatty acids biosynthesis. Catalyzes the dehydration of short chain beta-hydroxyacyl-ACPs and long chain saturated and unsaturated beta-hydroxyacyl-ACPs. The chain is 3-hydroxyacyl-[acyl-carrier-protein] dehydratase FabZ from Bacillus cytotoxicus (strain DSM 22905 / CIP 110041 / 391-98 / NVH 391-98).